Consider the following 476-residue polypeptide: Glycogen synthase (476 aa).

Lys15 is an ADP-alpha-D-glucose binding site.

It belongs to the glycosyltransferase 1 family. Bacterial/plant glycogen synthase subfamily.

It carries out the reaction [(1-&gt;4)-alpha-D-glucosyl](n) + ADP-alpha-D-glucose = [(1-&gt;4)-alpha-D-glucosyl](n+1) + ADP + H(+). It participates in glycan biosynthesis; glycogen biosynthesis. Synthesizes alpha-1,4-glucan chains using ADP-glucose. This Actinobacillus succinogenes (strain ATCC 55618 / DSM 22257 / CCUG 43843 / 130Z) protein is Glycogen synthase.